The chain runs to 297 residues: 4-hydroxy-tetrahydrodipicolinate synthase (297 aa).

Residue Thr55 participates in pyruvate binding. The active-site Proton donor/acceptor is the Tyr144. Residue Lys172 is the Schiff-base intermediate with substrate of the active site. Ile213 is a binding site for pyruvate.

This sequence belongs to the DapA family. In terms of assembly, homotetramer; dimer of dimers.

It is found in the cytoplasm. The enzyme catalyses L-aspartate 4-semialdehyde + pyruvate = (2S,4S)-4-hydroxy-2,3,4,5-tetrahydrodipicolinate + H2O + H(+). It participates in amino-acid biosynthesis; L-lysine biosynthesis via DAP pathway; (S)-tetrahydrodipicolinate from L-aspartate: step 3/4. Functionally, catalyzes the condensation of (S)-aspartate-beta-semialdehyde [(S)-ASA] and pyruvate to 4-hydroxy-tetrahydrodipicolinate (HTPA). In Lactococcus lactis subsp. lactis (strain IL1403) (Streptococcus lactis), this protein is 4-hydroxy-tetrahydrodipicolinate synthase.